The chain runs to 1270 residues: ATP-dependent helicase/nuclease subunit A (1270 aa).

The UvrD-like helicase ATP-binding domain maps to 3–476 (TKWTEEQELA…IMLYKNFRSR (474 aa)). 24-31 (AAAGSGKT) contacts ATP. The UvrD-like helicase C-terminal domain occupies 528–823 (IENLKVAGDI…RIMSIHKSKG (296 aa)).

It belongs to the helicase family. AddA subfamily. Heterodimer of AddA and AddB/RexB. Mg(2+) serves as cofactor.

It catalyses the reaction Couples ATP hydrolysis with the unwinding of duplex DNA by translocating in the 3'-5' direction.. The catalysed reaction is ATP + H2O = ADP + phosphate + H(+). The heterodimer acts as both an ATP-dependent DNA helicase and an ATP-dependent, dual-direction single-stranded exonuclease. Recognizes the chi site generating a DNA molecule suitable for the initiation of homologous recombination. The AddA nuclease domain is required for chi fragment generation; this subunit has the helicase and 3' -&gt; 5' nuclease activities. The chain is ATP-dependent helicase/nuclease subunit A from Clostridium perfringens (strain SM101 / Type A).